Reading from the N-terminus, the 445-residue chain is Ribosomal protein uS12 methylthiotransferase RimO (445 aa).

The region spanning 4-119 (IKVALVSLGC…LLESIKVFLK (116 aa)) is the MTTase N-terminal domain. Positions 13, 48, 82, 156, 160, and 163 each coordinate [4Fe-4S] cluster. Positions 142-372 (TTPTYTAYVR…MILQQSISKD (231 aa)) constitute a Radical SAM core domain. The 67-residue stretch at 375–441 (KEKIGKIYEV…EYDLIGVVYN (67 aa)) folds into the TRAM domain.

Belongs to the methylthiotransferase family. RimO subfamily. The cofactor is [4Fe-4S] cluster.

The protein resides in the cytoplasm. The enzyme catalyses L-aspartate(89)-[ribosomal protein uS12]-hydrogen + (sulfur carrier)-SH + AH2 + 2 S-adenosyl-L-methionine = 3-methylsulfanyl-L-aspartate(89)-[ribosomal protein uS12]-hydrogen + (sulfur carrier)-H + 5'-deoxyadenosine + L-methionine + A + S-adenosyl-L-homocysteine + 2 H(+). Its function is as follows. Catalyzes the methylthiolation of an aspartic acid residue of ribosomal protein uS12. This chain is Ribosomal protein uS12 methylthiotransferase RimO, found in Clostridium botulinum (strain Loch Maree / Type A3).